Reading from the N-terminus, the 432-residue chain is Ribosomal protein uS12 methylthiotransferase RimO (432 aa).

In terms of domain architecture, MTTase N-terminal spans 4–120; that stretch reads HNVFLLSLGC…LLQAIGAQYR (117 aa). Cys13, Cys49, Cys83, Cys144, Cys148, and Cys151 together coordinate [4Fe-4S] cluster. The Radical SAM core domain maps to 130–359; sequence LTPPHISYLK…MELQETIAKE (230 aa). The 68-residue stretch at 362–429 folds into the TRAM domain; sequence QLFEGKELTV…AYELHGTITA (68 aa).

Belongs to the methylthiotransferase family. RimO subfamily. The cofactor is [4Fe-4S] cluster.

Its subcellular location is the cytoplasm. It catalyses the reaction L-aspartate(89)-[ribosomal protein uS12]-hydrogen + (sulfur carrier)-SH + AH2 + 2 S-adenosyl-L-methionine = 3-methylsulfanyl-L-aspartate(89)-[ribosomal protein uS12]-hydrogen + (sulfur carrier)-H + 5'-deoxyadenosine + L-methionine + A + S-adenosyl-L-homocysteine + 2 H(+). Catalyzes the methylthiolation of an aspartic acid residue of ribosomal protein uS12. This is Ribosomal protein uS12 methylthiotransferase RimO from Chlorobium phaeobacteroides (strain DSM 266 / SMG 266 / 2430).